An 817-amino-acid polypeptide reads, in one-letter code: Probable beta-glucosidase G (817 aa).

The N-terminal stretch at 1–20 is a signal peptide; that stretch reads MASIAHLIFSGLLAATVANS. N-linked (GlcNAc...) asparagine glycans are attached at residues asparagine 40, asparagine 58, asparagine 229, and asparagine 276. The active site involves aspartate 304. Residues asparagine 343, asparagine 350, asparagine 402, asparagine 507, asparagine 563, asparagine 584, asparagine 623, asparagine 662, asparagine 679, and asparagine 715 are each glycosylated (N-linked (GlcNAc...) asparagine).

This sequence belongs to the glycosyl hydrolase 3 family.

The protein localises to the secreted. The enzyme catalyses Hydrolysis of terminal, non-reducing beta-D-glucosyl residues with release of beta-D-glucose.. The protein operates within glycan metabolism; cellulose degradation. Beta-glucosidases are one of a number of cellulolytic enzymes involved in the degradation of cellulosic biomass. Catalyzes the last step releasing glucose from the inhibitory cellobiose. The chain is Probable beta-glucosidase G (bglG) from Neosartorya fischeri (strain ATCC 1020 / DSM 3700 / CBS 544.65 / FGSC A1164 / JCM 1740 / NRRL 181 / WB 181) (Aspergillus fischerianus).